Consider the following 284-residue polypeptide: 2-dehydro-3-deoxyphosphooctonate aldolase (284 aa).

This sequence belongs to the KdsA family.

Its subcellular location is the cytoplasm. The enzyme catalyses D-arabinose 5-phosphate + phosphoenolpyruvate + H2O = 3-deoxy-alpha-D-manno-2-octulosonate-8-phosphate + phosphate. The protein operates within carbohydrate biosynthesis; 3-deoxy-D-manno-octulosonate biosynthesis; 3-deoxy-D-manno-octulosonate from D-ribulose 5-phosphate: step 2/3. Its pathway is bacterial outer membrane biogenesis; lipopolysaccharide biosynthesis. The polypeptide is 2-dehydro-3-deoxyphosphooctonate aldolase (Haemophilus influenzae (strain 86-028NP)).